Reading from the N-terminus, the 103-residue chain is Large ribosomal subunit protein bL21 (103 aa).

Belongs to the bacterial ribosomal protein bL21 family. In terms of assembly, part of the 50S ribosomal subunit. Contacts protein L20.

Its function is as follows. This protein binds to 23S rRNA in the presence of protein L20. The polypeptide is Large ribosomal subunit protein bL21 (Yersinia pseudotuberculosis serotype O:1b (strain IP 31758)).